Here is a 407-residue protein sequence, read N- to C-terminus: Phosphopentomutase (407 aa).

6 residues coordinate Mn(2+): D10, D306, H311, D347, H348, and H359.

It belongs to the phosphopentomutase family. The cofactor is Mn(2+).

Its subcellular location is the cytoplasm. It catalyses the reaction 2-deoxy-alpha-D-ribose 1-phosphate = 2-deoxy-D-ribose 5-phosphate. It carries out the reaction alpha-D-ribose 1-phosphate = D-ribose 5-phosphate. It functions in the pathway carbohydrate degradation; 2-deoxy-D-ribose 1-phosphate degradation; D-glyceraldehyde 3-phosphate and acetaldehyde from 2-deoxy-alpha-D-ribose 1-phosphate: step 1/2. Isomerase that catalyzes the conversion of deoxy-ribose 1-phosphate (dRib-1-P) and ribose 1-phosphate (Rib-1-P) to deoxy-ribose 5-phosphate (dRib-5-P) and ribose 5-phosphate (Rib-5-P), respectively. This Pectobacterium carotovorum subsp. carotovorum (strain PC1) protein is Phosphopentomutase.